The chain runs to 129 residues: Probable protein cornichon homolog 2 (129 aa).

2 helical membrane passes run 45 to 65 and 105 to 125; these read FIVQ…FMTL and LAYI…SALD.

Belongs to the cornichon family.

The protein resides in the membrane. The sequence is that of Probable protein cornichon homolog 2 from Arabidopsis thaliana (Mouse-ear cress).